The following is a 106-amino-acid chain: Toxin-like structure LSTX-D9 (106 aa).

The signal sequence occupies residues Met-1 to Ser-20. Residues Asp-21 to Arg-41 constitute a propeptide that is removed on maturation. 4 disulfides stabilise this stretch: Cys-45–Cys-60, Cys-52–Cys-69, Cys-59–Cys-85, and Cys-71–Cys-83.

The protein belongs to the neurotoxin 19 (CSTX) family. 02 (D7) subfamily. As to expression, expressed by the venom gland.

The protein resides in the secreted. In Lycosa singoriensis (Wolf spider), this protein is Toxin-like structure LSTX-D9.